The primary structure comprises 147 residues: Putative cystatin-9-like protein CST9LP1 (147 aa).

The N-terminal stretch at 1–28 is a signal peptide; it reads MWSLPPSRALSCAPLLLLFSFQFLVTYA. A disulfide bridge links C98 with C108. N117 and N139 each carry an N-linked (GlcNAc...) asparagine glycan. Cysteines 122 and 142 form a disulfide.

Belongs to the cystatin family.

Its subcellular location is the secreted. The sequence is that of Putative cystatin-9-like protein CST9LP1 (CST9LP1) from Homo sapiens (Human).